The chain runs to 286 residues: Cytotoxin (286 aa).

A propeptide spanning residues 267 to 286 (TFYNYASLVPDLETRVRSAE) is cleaved from the precursor.

It belongs to the aerolysin family.

It localises to the secreted. In terms of biological role, cytotoxin is thought to form hydrophilic pores in cell membranes. The sequence is that of Cytotoxin (ctx) from Pseudomonas aeruginosa.